The primary structure comprises 271 residues: Protein ABHD14A (271 aa).

A helical; Signal-anchor for type II membrane protein membrane pass occupies residues 35–55 (VALLGLSLLLMLLLYVGLPGP). N-linked (GlcNAc...) asparagine glycosylation is present at Asn67. Catalysis depends on Ser171, which acts as the Charge relay system. Residue Asn201 is glycosylated (N-linked (GlcNAc...) asparagine). Catalysis depends on charge relay system residues Asp222 and His249.

The protein belongs to the AB hydrolase superfamily. ABHD14 family.

Its subcellular location is the cytoplasm. It localises to the membrane. Functionally, possible role in granule neuron development. The protein is Protein ABHD14A of Homo sapiens (Human).